Consider the following 361-residue polypeptide: ETS translocation variant 3-like protein (361 aa).

Residues 39 to 120 (IQLWHFILEL…KGKRFTYKFN (82 aa)) constitute a DNA-binding region (ETS). A disordered region spans residues 178–201 (LTGQQTPRGPPETSGDKKGSSSSV).

Belongs to the ETS family.

The protein localises to the nucleus. Its function is as follows. Transcriptional regulator. The sequence is that of ETS translocation variant 3-like protein (ETV3L) from Homo sapiens (Human).